A 412-amino-acid chain; its full sequence is Translation initiation factor 2 subunit gamma (412 aa).

In terms of domain architecture, tr-type G spans 8–205 (QAEMNIGMVG…AMYEHFEPPE (198 aa)). The interval 17 to 24 (GHVDHGKT) is G1. Mg(2+) is bound by residues D20, T24, G45, and S47. GTP is bound at residue 20–25 (DHGKTT). A G2 region spans residues 45–49 (GISIR). Positions 60, 63, 72, and 75 each coordinate Zn(2+). The tract at residues 89 to 92 (DSPG) is G3. GTP-binding positions include 145 to 148 (NKID) and 183 to 185 (SAQ). The segment at 145-148 (NKID) is G4. Residues 183–185 (SAQ) are G5.

Belongs to the TRAFAC class translation factor GTPase superfamily. Classic translation factor GTPase family. EIF2G subfamily. As to quaternary structure, heterotrimer composed of an alpha, a beta and a gamma chain. Requires Mg(2+) as cofactor.

It carries out the reaction GTP + H2O = GDP + phosphate + H(+). In terms of biological role, eIF-2 functions in the early steps of protein synthesis by forming a ternary complex with GTP and initiator tRNA. The polypeptide is Translation initiation factor 2 subunit gamma (Methanopyrus kandleri (strain AV19 / DSM 6324 / JCM 9639 / NBRC 100938)).